Here is a 192-residue protein sequence, read N- to C-terminus: Adenine phosphoribosyltransferase 2 (192 aa).

This sequence belongs to the purine/pyrimidine phosphoribosyltransferase family. As to quaternary structure, homodimer.

It is found in the cytoplasm. The enzyme catalyses AMP + diphosphate = 5-phospho-alpha-D-ribose 1-diphosphate + adenine. The protein operates within purine metabolism; AMP biosynthesis via salvage pathway; AMP from adenine: step 1/1. Functionally, catalyzes a salvage reaction resulting in the formation of AMP, that is energically less costly than de novo synthesis. May contribute to the recycling of adenine into adenylate nucleotides and the inactivation of cytokinins by phosphoribosylation. Possesses low activity toward adenine and cytokinins. This chain is Adenine phosphoribosyltransferase 2 (APT2), found in Arabidopsis thaliana (Mouse-ear cress).